The primary structure comprises 231 residues: Small ribosomal subunit protein uS3 (231 aa).

The KH type-2 domain occupies Ile38–Lys106.

The protein belongs to the universal ribosomal protein uS3 family. In terms of assembly, part of the 30S ribosomal subunit. Forms a tight complex with proteins S10 and S14.

Its function is as follows. Binds the lower part of the 30S subunit head. Binds mRNA in the 70S ribosome, positioning it for translation. The chain is Small ribosomal subunit protein uS3 from Endomicrobium trichonymphae.